We begin with the raw amino-acid sequence, 282 residues long: MKRIGAHVSASGGVSNAPLNAAKIGADAFALFVKNQRQWSAKPLENQEIENFKQNLKISKILPEHILAHDSYLINLGHPNLQNRQKSLETFIDEINRCEILGIRLLNFHPGSHLKLISEQECLKNIAESINKALANTNRVKLVIENTAGQGSNLGYHFDQIAFIIKNVSDKSRIGVCIDTCHAFAGGYDFRTKAAYEKTMSEFDAKIGYKFLSGMHLNDTKNELGIRKDRHESLGKGFLGLESFENIMNDKNIDEIPMILETIDETIWPDEIKILRNLIKGN.

Zn(2+)-binding residues include His-69, His-109, Glu-145, Asp-179, His-182, His-216, Asp-229, His-231, and Glu-261.

Belongs to the AP endonuclease 2 family. Zn(2+) serves as cofactor.

The catalysed reaction is Endonucleolytic cleavage to 5'-phosphooligonucleotide end-products.. Endonuclease IV plays a role in DNA repair. It cleaves phosphodiester bonds at apurinic or apyrimidinic (AP) sites, generating a 3'-hydroxyl group and a 5'-terminal sugar phosphate. The chain is Probable endonuclease 4 from Campylobacter hominis (strain ATCC BAA-381 / DSM 21671 / CCUG 45161 / LMG 19568 / NCTC 13146 / CH001A).